The following is a 62-amino-acid chain: Photosystem II reaction center protein Z (62 aa).

The next 2 membrane-spanning stretches (helical) occupy residues 8 to 28 (AVFALIATSLILVIGVPVVFA) and 41 to 61 (FSGTSLWIGLVFLVGILNSLI).

This sequence belongs to the PsbZ family. PSII is composed of 1 copy each of membrane proteins PsbA, PsbB, PsbC, PsbD, PsbE, PsbF, PsbH, PsbI, PsbJ, PsbK, PsbL, PsbM, PsbT, PsbY, PsbZ, Psb30/Ycf12, at least 3 peripheral proteins of the oxygen-evolving complex and a large number of cofactors. It forms dimeric complexes.

It localises to the plastid. It is found in the chloroplast thylakoid membrane. Its function is as follows. May control the interaction of photosystem II (PSII) cores with the light-harvesting antenna, regulates electron flow through the 2 photosystem reaction centers. PSII is a light-driven water plastoquinone oxidoreductase, using light energy to abstract electrons from H(2)O, generating a proton gradient subsequently used for ATP formation. This chain is Photosystem II reaction center protein Z, found in Piper cenocladum (Ant piper).